A 466-amino-acid polypeptide reads, in one-letter code: Magnetosome-associated protein MamJ (466 aa).

Disordered stretches follow at residues 1-23 and 60-80; these read MAKN…ISTG and ANQG…RSQD. Residues 1 to 24 are not required to restore magnetic response to deletion mutant; the sequence is MAKNRRDRGTDLPGDGDQKISTGP. Residues 25 to 80 are required to restore magnetic response to deletion mutant; sequence EIVSVTVHPSPNLAAAAKPVQGDIWASLLESSPWSANQGGLVETAQPPSAPIRSQD. Tandem repeat unit repeat units follow at residues 81–168 and 169–256; these read PVPV…VEPE and PAPV…VEPE. 4 not required to restore magnetic response to deletion mutant regions span residues 81–256, 136–334, 333–374, and 432–466; these read PVPV…VEPE, ETDA…SQAE, AESV…AVEA, and VGSN…DKNK. Glu-Pro-rich motif repeat units follow at residues 145–164, 233–252, and 253–272; these read IEPE…EAAE and VEPE…EAAE. 2 required to restore magnetic response to deletion mutant regions span residues 375-432 and 426-466; these read TRQP…GRLV and VKGG…DKNK.

Belongs to the magnetosome MamJ protein family. Forms homooligomers. Interacts with MamK. Identified by N-terminal sequencing of a protein that is about 96 kDa in size. The protein runs anomalously on protein gels.

The protein resides in the magnetosome. Functionally, required for assembly of magnetosome chains. Regulates the dynamic behavior of MamK filaments. May connect magnetosomes to MamK filaments. Moves from the cell poles towards midcell; movement does not depend on the treadmilling ability of MamK, suggesting MamJ associates and disassociates continuously from the MamK filament. The polypeptide is Magnetosome-associated protein MamJ (Magnetospirillum gryphiswaldense (strain DSM 6361 / JCM 21280 / NBRC 15271 / MSR-1)).